A 122-amino-acid chain; its full sequence is Phosphoribosyl-ATP pyrophosphatase (122 aa).

The protein belongs to the PRA-PH family.

It localises to the cytoplasm. The catalysed reaction is 1-(5-phospho-beta-D-ribosyl)-ATP + H2O = 1-(5-phospho-beta-D-ribosyl)-5'-AMP + diphosphate + H(+). It participates in amino-acid biosynthesis; L-histidine biosynthesis; L-histidine from 5-phospho-alpha-D-ribose 1-diphosphate: step 2/9. The sequence is that of Phosphoribosyl-ATP pyrophosphatase from Cupriavidus metallidurans (strain ATCC 43123 / DSM 2839 / NBRC 102507 / CH34) (Ralstonia metallidurans).